The following is a 584-amino-acid chain: Aspartate--tRNA(Asp/Asn) ligase (584 aa).

Position 177 (Glu177) interacts with L-aspartate. Residues 201–204 (QLFK) are aspartate. Arg223 is an L-aspartate binding site. Residues 223–225 (RDE) and Gln232 each bind ATP. An L-aspartate-binding site is contributed by His447. Glu481 lines the ATP pocket. Arg488 is an L-aspartate binding site. ATP is bound at residue 533-536 (GLDR).

This sequence belongs to the class-II aminoacyl-tRNA synthetase family. Type 1 subfamily. In terms of assembly, homodimer.

It is found in the cytoplasm. The enzyme catalyses tRNA(Asx) + L-aspartate + ATP = L-aspartyl-tRNA(Asx) + AMP + diphosphate. In terms of biological role, aspartyl-tRNA synthetase with relaxed tRNA specificity since it is able to aspartylate not only its cognate tRNA(Asp) but also tRNA(Asn). Reaction proceeds in two steps: L-aspartate is first activated by ATP to form Asp-AMP and then transferred to the acceptor end of tRNA(Asp/Asn). In Chlamydia caviae (strain ATCC VR-813 / DSM 19441 / 03DC25 / GPIC) (Chlamydophila caviae), this protein is Aspartate--tRNA(Asp/Asn) ligase.